A 338-amino-acid chain; its full sequence is Phenylalanine--tRNA ligase alpha subunit (338 aa).

The tract at residues 71 to 101 (QFEEKRSSLSQQTSSSDTYQSLPDLTLPGRQ) is disordered. Positions 78-92 (SLSQQTSSSDTYQSL) are enriched in low complexity. Mg(2+) is bound at residue E253.

This sequence belongs to the class-II aminoacyl-tRNA synthetase family. Phe-tRNA synthetase alpha subunit type 1 subfamily. Tetramer of two alpha and two beta subunits. The cofactor is Mg(2+).

The protein localises to the cytoplasm. The catalysed reaction is tRNA(Phe) + L-phenylalanine + ATP = L-phenylalanyl-tRNA(Phe) + AMP + diphosphate + H(+). This Desulfotalea psychrophila (strain LSv54 / DSM 12343) protein is Phenylalanine--tRNA ligase alpha subunit.